The primary structure comprises 473 residues: UDP-N-acetylmuramate--L-alanine ligase (473 aa).

122 to 128 (GTHGKTT) provides a ligand contact to ATP.

The protein belongs to the MurCDEF family.

Its subcellular location is the cytoplasm. The enzyme catalyses UDP-N-acetyl-alpha-D-muramate + L-alanine + ATP = UDP-N-acetyl-alpha-D-muramoyl-L-alanine + ADP + phosphate + H(+). Its pathway is cell wall biogenesis; peptidoglycan biosynthesis. Cell wall formation. This chain is UDP-N-acetylmuramate--L-alanine ligase, found in Teredinibacter turnerae (strain ATCC 39867 / T7901).